Consider the following 446-residue polypeptide: Packaging protein 1 (446 aa).

The interval 1-71 is disordered; sequence MEEKAGLGRL…QPQASKPKKH (71 aa). Positions 31–43 are enriched in basic and acidic residues; the sequence is FHSDRNHPNKEAE. ATP is bound at residue 170–177; that stretch reads GPTGCGKS. The tract at residues 439–446 is DNA-binding; sequence RYYHSKKK.

Belongs to the adenoviridae packaging protein 1 family. In terms of assembly, homodimer. Part of a genome packaging complex composed of packaging proteins 1, 2 and 3; this complex specifically binds to the packaging sequence on the left end of viral genomic DNA and performs packaging of the viral genome. Interacts with protein 33K.

It is found in the virion. The protein resides in the host nucleus. It localises to the host nucleoplasm. The protein localises to the host nucleolus. Its function is as follows. Component of the packaging machinery which encapsidates the viral DNA into preformed capsids and transcriptional activator of the viral major late promoter (MLP). Binds, along with packaging proteins 2 and 3, to the specific packaging sequence on the left end of viral genomic DNA and displays ATPase activity thereby providing the power stroke of the packaging machinery. The activity of packaging protein IVa2 is stimulated by protein 33K which acts as a terminase. May be the protein that pumps DNA into the capsid powered by ATP hydrolysis. Specifically binds to the 5'-CG-3' nucleotides of the repeats making up the packaging sequence. Component of the DEF-A and DEF-B transcription factors that bind downstream elements of the major late promoter (MLP), and stimulate transcription from the MLP after initiation of viral DNA replication. DEF-A is a heterodimer packaging proteins 1 and 2 and DEF-B is a homodimer of packaging protein 1. This chain is Packaging protein 1, found in Canine adenovirus serotype 2 (strain Toronto A 26-61) (CAdV-2).